Consider the following 403-residue polypeptide: Flavohemoprotein (403 aa).

Residues 1-138 (MLTPEQKAIV…LADLMIGIEK (138 aa)) form the Globin domain. His-85 is a heme b binding site. Catalysis depends on charge relay system residues Tyr-95 and Glu-137. Positions 149-403 (GGWRDFRPFR…SQSFAPVILG (255 aa)) are reductase. An FAD-binding FR-type domain is found at 152 to 257 (RDFRPFRVAR…HVPAGDFVLQ (106 aa)). FAD-binding positions include Tyr-190 and 206–209 (RQYS). 269–274 (GVGITP) contacts NADP(+). 390–393 (TFGP) lines the FAD pocket.

This sequence belongs to the globin family. Two-domain flavohemoproteins subfamily. In the C-terminal section; belongs to the flavoprotein pyridine nucleotide cytochrome reductase family. It depends on heme b as a cofactor. FAD is required as a cofactor.

The catalysed reaction is 2 nitric oxide + NADPH + 2 O2 = 2 nitrate + NADP(+) + H(+). The enzyme catalyses 2 nitric oxide + NADH + 2 O2 = 2 nitrate + NAD(+) + H(+). The chain is Flavohemoprotein from Deinococcus radiodurans (strain ATCC 13939 / DSM 20539 / JCM 16871 / CCUG 27074 / LMG 4051 / NBRC 15346 / NCIMB 9279 / VKM B-1422 / R1).